The primary structure comprises 156 residues: MEVEFSRENFLLPEMKYEYLDHTADVQIHGWGSSLKEAFEQCGVAMFGYMTELDYVSVEQCFEIEAHGDDLESLLFHFLDELLFLFSAEPYLVCKKLEITKFDVENFEISCHCYGEPFELGKHPQGTEVKAITYSAMQIIQDVEASNYEVFVIIDI.

Residues aspartate 25, aspartate 155, and isoleucine 156 each coordinate Ca(2+).

This sequence belongs to the archease family.

In terms of biological role, component of the tRNA-splicing ligase complex required to facilitate the enzymatic turnover of catalytic subunit RtcB. Plays an important role in a RNA repair and splicing pathway which controls axon regeneration in response to peripheral (PNS) and central nervous system (CNS) injury, by activating splicing of Xbp1 to promote axon regeneration in response to axotomy. The polypeptide is Protein archease-like (Drosophila melanogaster (Fruit fly)).